Reading from the N-terminus, the 291-residue chain is Lipoyl synthase, mitochondrial (291 aa).

[4Fe-4S] cluster-binding residues include cysteine 45, cysteine 50, cysteine 56, cysteine 71, cysteine 75, cysteine 78, and serine 283. In terms of domain architecture, Radical SAM core spans tryptophan 57–arginine 272.

It belongs to the radical SAM superfamily. Lipoyl synthase family. [4Fe-4S] cluster serves as cofactor.

It localises to the mitochondrion. The enzyme catalyses [[Fe-S] cluster scaffold protein carrying a second [4Fe-4S](2+) cluster] + N(6)-octanoyl-L-lysyl-[protein] + 2 oxidized [2Fe-2S]-[ferredoxin] + 2 S-adenosyl-L-methionine + 4 H(+) = [[Fe-S] cluster scaffold protein] + N(6)-[(R)-dihydrolipoyl]-L-lysyl-[protein] + 4 Fe(3+) + 2 hydrogen sulfide + 2 5'-deoxyadenosine + 2 L-methionine + 2 reduced [2Fe-2S]-[ferredoxin]. It functions in the pathway protein modification; protein lipoylation via endogenous pathway; protein N(6)-(lipoyl)lysine from octanoyl-[acyl-carrier-protein]: step 2/2. Functionally, catalyzes the radical-mediated insertion of two sulfur atoms into the C-6 and C-8 positions of the octanoyl moiety bound to the lipoyl domains of lipoate-dependent enzymes, thereby converting the octanoylated domains into lipoylated derivatives. In Nematostella vectensis (Starlet sea anemone), this protein is Lipoyl synthase, mitochondrial.